Here is a 386-residue protein sequence, read N- to C-terminus: Enoyl-[acyl-carrier-protein] reductase 2, mitochondrial (386 aa).

Residues 1 to 22 constitute a mitochondrion transit peptide; the sequence is MYSVLKQSIRPRLLATHNQFRT. Catalysis depends on tyrosine 79, which acts as the Proton donor. Residues asparagine 172, 199-202, 222-224, 296-299, 321-323, and lysine 381 each bind NADP(+); these read TSAV, RDR, YGGM, and FWV.

The protein belongs to the zinc-containing alcohol dehydrogenase family. Quinone oxidoreductase subfamily. Homodimer and heterodimer with ETR1.

Its subcellular location is the mitochondrion. The enzyme catalyses a 2,3-saturated acyl-[ACP] + NADP(+) = a (2E)-enoyl-[ACP] + NADPH + H(+). Its function is as follows. Required for respiration and the maintenance of the mitochondrial compartment. Oxidoreductase with a preference for short and medium chain substrates, including trans-2-hexenoyl-CoA (C6), trans-2-decenoyl-CoA (C10), and trans-2-hexadecenoyl-CoA (C16). May play a role in mitochondrial fatty acid synthesis. The polypeptide is Enoyl-[acyl-carrier-protein] reductase 2, mitochondrial (ETR2) (Candida tropicalis (Yeast)).